Here is a 489-residue protein sequence, read N- to C-terminus: MANDVSGLGPTAFVRLLAFHLIGLFVSITVYRLFFHNLSGFRGPFIARLSSFYLAWLSAKRLHLHDEIDDLHSLYGDYVRTGPRELSIIDPQCVQVIYGSQTKCIKGPIYTLLDPRTNLSSTRDKTEHAKRRRAWDRGFSTTALHTYEPMVQELTEELMTIIDELSENPINITEWVDKYAFEVMGQLTFGKPFNMLKERKEAYFLELIRQDMNAIGYLLNLPWLSYLFLRTPGLNQNHLNFWRWIENEFAQRIARGQRRPDVFNWLHQAYLQGPQTKSDTLKLHGDGYLVIVAGSDTTASTITHLLFYLACNKALTQKLQAQLDALEGLTDESLRDVELLDACINETLRLRPAVPAGVQRETPKEGIYIGNRYIPGDTIVKVPMYTLFRDPRSFEQPNEFIPERFTTRPELVKDKSVFIPFLTGSYACVGRRLALMEVRRAVAAILCRYDIALAPGQNEEGFLDGKIDAFTLVAAPLSLKFTRRHQQKQ.

A helical membrane pass occupies residues 13–35 (FVRLLAFHLIGLFVSITVYRLFF). N-linked (GlcNAc...) asparagine glycosylation is found at N37, N118, N171, and N345. C428 contacts heme.

The protein belongs to the cytochrome P450 family. Heme is required as a cofactor.

The protein localises to the membrane. Its pathway is mycotoxin biosynthesis. Functionally, cytochrome P450 monooxygenase; part of the gene cluster that mediates the biosynthesis of brefeldin A (BFA), a protein transport inhibitor that shows antiviral, antifungal, and antitumor properties. The proposed biosynthesis of BFA involves formation of an acyclic polyketide chain that is differentially tailored throughout the backbone. The highly reducing polyketide synthase Bref-PKS is proposed to synthesize the precisely reduced octaketide precursor, which could then be directly offloaded by the thiohydrolase enzyme Bref-TH followed by a cytochrome P450 monooxygenase-mediated formation of the cyclopentane ring and macrocyclization to afford 7-deoxy BFA. Alternatively, the first ring annulation can also occur on the ACP-tethered intermediate before the thiohydrolase release and lactonization. The C7-hydroxylation by another cytochrome P450 monooxygenase is believed to be the final step in the process to obtain the final structure of BFA. In addition to the HRPKS Bref-PKS and the thiohydrolase Bref-TH, the brefeldin A biosynthesis cluster contains 4 cytochrome p450 monooxygenases (called orf3 to orf6), as well a the probable cluster-specific transcription regulator orf8. This Eupenicillium brefeldianum (Penicillium brefeldianum) protein is Cytochrome P450 monooxygenase orf5.